Consider the following 3718-residue polypeptide: Laminin subunit alpha-5 (3718 aa).

Residues 1–40 (MAKRGGQLCAGSAPGALGPRSPAPRPLLLLLAGLALVGEA) form the signal peptide. In terms of domain architecture, Laminin N-terminal spans 46 to 304 (DGFSLHPPYF…SIKDISIGGR (259 aa)). N-linked (GlcNAc...) asparagine glycans are attached at residues asparagine 100, asparagine 148, and asparagine 248. Cystine bridges form between cysteine 305–cysteine 314, cysteine 307–cysteine 327, cysteine 329–cysteine 338, cysteine 341–cysteine 361, cysteine 364–cysteine 373, cysteine 366–cysteine 398, cysteine 401–cysteine 410, cysteine 413–cysteine 431, cysteine 434–cysteine 445, cysteine 436–cysteine 452, cysteine 454–cysteine 463, and cysteine 466–cysteine 476. 3 Laminin EGF-like domains span residues 305–363 (CVCH…ECQS), 364–433 (CNCH…VCRP), and 434–479 (CDCE…CYPL). Asparagine 383 is a glycosylation site (N-linked (GlcNAc...) asparagine). N-linked (GlcNAc...) asparagine glycosylation is present at asparagine 457. N-linked (GlcNAc...) asparagine glycosylation is present at asparagine 485. Cystine bridges form between cysteine 500/cysteine 512, cysteine 502/cysteine 521, cysteine 523/cysteine 532, cysteine 535/cysteine 544, cysteine 547/cysteine 559, cysteine 549/cysteine 566, cysteine 568/cysteine 577, cysteine 580/cysteine 590, cysteine 593/cysteine 605, cysteine 595/cysteine 611, cysteine 613/cysteine 622, cysteine 625/cysteine 635, cysteine 638/cysteine 650, cysteine 640/cysteine 656, cysteine 658/cysteine 667, cysteine 670/cysteine 680, cysteine 683/cysteine 695, cysteine 685/cysteine 702, cysteine 704/cysteine 713, cysteine 716/cysteine 731, cysteine 752/cysteine 761, cysteine 764/cysteine 779, cysteine 782/cysteine 796, cysteine 784/cysteine 802, cysteine 804/cysteine 813, cysteine 816/cysteine 831, cysteine 834/cysteine 846, cysteine 836/cysteine 853, and cysteine 855/cysteine 864. Laminin EGF-like domains lie at 500–546 (CDCN…SCHP), 547–592 (CQCS…LCQL), 593–637 (CGCS…DCHA), 638–682 (CACD…SCIP), 683–728 (CHCS…YCEA), 729–781 (GSCH…GCTR), and 782–833 (CSCD…GCRS). Residues 834–855 (CRCDVGGALGQGCEPKTGACRC) enclose the Laminin EGF-like 11; truncated domain. The segment at 856–1442 (RPNTQGPTCS…SLFYNNGALP (587 aa)) is domain IV 1 (domain IV B). 3 N-linked (GlcNAc...) asparagine glycosylation sites follow: asparagine 905, asparagine 926, and asparagine 964. Positions 1253–1284 (LTQSQELSPGAPPEGPQPRPPTAVDPNAEPTL) are disordered. Residues 1262 to 1275 (GAPPEGPQPRPPTA) show a composition bias toward pro residues. Asparagine 1335 carries an N-linked (GlcNAc...) asparagine glycan. 16 disulfide bridges follow: cysteine 1443–cysteine 1455, cysteine 1445–cysteine 1462, cysteine 1464–cysteine 1473, cysteine 1476–cysteine 1486, cysteine 1489–cysteine 1496, cysteine 1491–cysteine 1503, cysteine 1505–cysteine 1514, cysteine 1517–cysteine 1530, cysteine 1533–cysteine 1548, cysteine 1535–cysteine 1555, cysteine 1557–cysteine 1566, cysteine 1569–cysteine 1579, cysteine 1582–cysteine 1594, cysteine 1584–cysteine 1601, cysteine 1603–cysteine 1612, and cysteine 1615–cysteine 1630. Laminin EGF-like domains are found at residues 1443 to 1488 (CGCH…NCRP), 1489 to 1532 (CDCG…GCEE), 1533 to 1581 (CNCS…SCRP), and 1582 to 1632 (CDCH…GCTR). A glycan (N-linked (GlcNAc...) asparagine) is linked at asparagine 1534. The Laminin EGF-like 16; first part domain maps to 1633-1642 (CFCFGATERC). The 186-residue stretch at 1646–1831 (NLARHEFVDM…RGPPASNVEL (186 aa)) folds into the Laminin IV type A domain. Short sequence motifs (cell attachment site) lie at residues 1723–1725 (RGD) and 1839–1841 (RGD). The Laminin EGF-like 16; second part domain maps to 1832-1864 (CMCPANYRGDSCQECAPGYYRDTKGLFLGRCVP). Cystine bridges form between cysteine 1865–cysteine 1874, cysteine 1867–cysteine 1881, cysteine 1884–cysteine 1893, cysteine 1896–cysteine 1912, cysteine 1915–cysteine 1930, cysteine 1917–cysteine 1939, cysteine 1941–cysteine 1950, cysteine 1953–cysteine 1968, cysteine 1971–cysteine 1986, cysteine 1973–cysteine 1993, cysteine 1996–cysteine 2005, cysteine 2008–cysteine 2022, cysteine 2025–cysteine 2035, cysteine 2027–cysteine 2042, cysteine 2044–cysteine 2053, cysteine 2056–cysteine 2069, cysteine 2072–cysteine 2083, cysteine 2074–cysteine 2090, cysteine 2092–cysteine 2101, cysteine 2104–cysteine 2116, cysteine 2119–cysteine 2126, cysteine 2121–cysteine 2133, cysteine 2135–cysteine 2144, and cysteine 2147–cysteine 2166. Laminin EGF-like domains are found at residues 1865–1914 (CQCH…PCVS), 1915–1970 (CPCP…SCQP), 1971–2024 (CDCS…NCTR), 2025–2071 (CDCS…GCRP), 2072–2118 (CACG…GCRR), and 2119–2168 (CQCP…HCEV). Asparagine 2021 is a glycosylation site (N-linked (GlcNAc...) asparagine). Positions 2169–2735 (CDHCVVLLLD…AQARSAASKV (567 aa)) are domain II and I. Residues asparagine 2198, asparagine 2211, asparagine 2365, asparagine 2395, asparagine 2425, asparagine 2503, and asparagine 2570 are each glycosylated (N-linked (GlcNAc...) asparagine). 2 coiled-coil regions span residues 2205–2257 (ARLH…SQAT) and 2330–2464 (TRDL…ASLD). Coiled-coil stretches lie at residues 2604 to 2621 (ARKN…AMLA) and 2639 to 2705 (AEAL…LENR). A glycan (N-linked (GlcNAc...) asparagine) is linked at asparagine 2709. Laminin G-like domains lie at 2736-2933 (KVSM…DKPC), 2947-3119 (GSYL…SFGC), 3128-3296 (TMTF…SVGC), 3337-3511 (AYQF…VTPC), and 3518-3689 (DGLF…MRGC). Disulfide bonds link cysteine 2903–cysteine 2933 and cysteine 3094–cysteine 3119. N-linked (GlcNAc...) asparagine glycans are attached at residues asparagine 3111, asparagine 3213, asparagine 3261, and asparagine 3291. Intrachain disulfides connect cysteine 3265–cysteine 3296 and cysteine 3488–cysteine 3511. Asparagine 3623 and asparagine 3673 each carry an N-linked (GlcNAc...) asparagine glycan. Cysteine 3661 and cysteine 3689 form a disulfide bridge.

In terms of assembly, laminin is a complex glycoprotein, consisting of three different polypeptide chains (alpha, beta, gamma), which are bound to each other by disulfide bonds into a cross-shaped molecule comprising one long and three short arms with globules at each end. Alpha-5 is a subunit of laminin-10 (laminin-511), laminin-11 (laminin-521) and laminin-15 (laminin-523). As to expression, in adult, high levels in heart, lung, and kidney; lower in brain, muscle and testis; very low in liver, gut and skin.

The protein resides in the secreted. Its subcellular location is the extracellular space. The protein localises to the extracellular matrix. It is found in the basement membrane. Its function is as follows. Binding to cells via a high affinity receptor, laminin is thought to mediate the attachment, migration and organization of cells into tissues during embryonic development by interacting with other extracellular matrix components. Alpha-5 may be the major laminin alpha chain of adult epithelial and/or endothelial basal laminae. Plays a role in the regulation of skeletogenesis, through a mechanism that involves integrin-mediated signaling and PTK2B/PYK2. The polypeptide is Laminin subunit alpha-5 (Lama5) (Mus musculus (Mouse)).